The following is a 251-amino-acid chain: Capsid protein (251 aa).

Residues Met1–Lys35 form a disordered region. Residues Lys3–Ser20 carry the Bipartite nuclear localization signal motif. Residues Ser15–Lys35 show a composition bias toward polar residues. A Nuclear localization signal motif is present at residues Lys35–Arg49. A zinc finger lies at Tyr54–Ser71. Positions Ile96 to Met117 match the Nuclear export signal motif. A Bipartite nuclear localization signal motif is present at residues Arg195–Arg242.

Belongs to the geminiviridae capsid protein family. As to quaternary structure, homomultimer. Binds to single-stranded and double-stranded viral DNA. Interacts (via nuclear localization signals) with host importin alpha-1a.

The protein resides in the virion. The protein localises to the host nucleus. Its function is as follows. Encapsidates the viral DNA into characteristic twinned ('geminate') particles. Binds the genomic viral ssDNA and shuttles it into and out of the cell nucleus. The CP of bipartite geminiviruses is not required for cell-to-cell or systemic movement. The sequence is that of Capsid protein from Macroptilium lathyroides (Lima bean).